The following is a 64-amino-acid chain: Frontoxin V (64 aa).

5 disulfide bridges follow: C3/C24, C6/C11, C17/C41, C45/C57, and C58/C63.

In terms of tissue distribution, expressed by the venom gland.

It is found in the secreted. Produces peripheral paralysis by blocking neuromuscular transmission at the postsynaptic site. Binds to the muscular nicotinic acetylcholine receptor (nAChR). The chain is Frontoxin V from Micrurus frontalis (Coral snake).